Here is a 617-residue protein sequence, read N- to C-terminus: Glutamyl-tRNA(Gln) amidotransferase subunit B, mitochondrial (617 aa).

Residues 1 to 56 constitute a mitochondrion transit peptide; the sequence is MPRIPTSVLGKYLLSGQISRQGCVGARQITRHSALPSAAVSVANSARLLHVSSETV. The tract at residues 53–90 is disordered; the sequence is SETVPPPPAQPVPLRKQLKDEAKKAKKQGKKKSKGDSQ. Positions 76–85 are enriched in basic residues; the sequence is KAKKQGKKKS.

Belongs to the GatB/GatE family. GatB subfamily. As to quaternary structure, subunit of the heterotrimeric GatCAB amidotransferase (AdT) complex, composed of A, B and C subunits.

Its subcellular location is the mitochondrion. It catalyses the reaction L-glutamyl-tRNA(Gln) + L-glutamine + ATP + H2O = L-glutaminyl-tRNA(Gln) + L-glutamate + ADP + phosphate + H(+). Its function is as follows. Allows the formation of correctly charged Gln-tRNA(Gln) through the transamidation of misacylated Glu-tRNA(Gln) in the mitochondria. The reaction takes place in the presence of glutamine and ATP through an activated gamma-phospho-Glu-tRNA(Gln). The polypeptide is Glutamyl-tRNA(Gln) amidotransferase subunit B, mitochondrial (Fusarium vanettenii (strain ATCC MYA-4622 / CBS 123669 / FGSC 9596 / NRRL 45880 / 77-13-4) (Fusarium solani subsp. pisi)).